A 325-amino-acid chain; its full sequence is ATP phosphoribosyltransferase (325 aa).

It belongs to the ATP phosphoribosyltransferase family. Long subfamily. Mg(2+) is required as a cofactor.

The protein localises to the cytoplasm. It catalyses the reaction 1-(5-phospho-beta-D-ribosyl)-ATP + diphosphate = 5-phospho-alpha-D-ribose 1-diphosphate + ATP. The protein operates within amino-acid biosynthesis; L-histidine biosynthesis; L-histidine from 5-phospho-alpha-D-ribose 1-diphosphate: step 1/9. Feedback inhibited by histidine. In terms of biological role, catalyzes the condensation of ATP and 5-phosphoribose 1-diphosphate to form N'-(5'-phosphoribosyl)-ATP (PR-ATP). Has a crucial role in the pathway because the rate of histidine biosynthesis seems to be controlled primarily by regulation of HisG enzymatic activity. The sequence is that of ATP phosphoribosyltransferase from Bradyrhizobium sp. (strain ORS 278).